A 156-amino-acid chain; its full sequence is Small ribosomal subunit protein uS7 (156 aa).

This sequence belongs to the universal ribosomal protein uS7 family. In terms of assembly, part of the 30S ribosomal subunit. Contacts proteins S9 and S11.

One of the primary rRNA binding proteins, it binds directly to 16S rRNA where it nucleates assembly of the head domain of the 30S subunit. Is located at the subunit interface close to the decoding center, probably blocks exit of the E-site tRNA. The protein is Small ribosomal subunit protein uS7 of Macrococcus caseolyticus (strain JCSC5402) (Macrococcoides caseolyticum).